Reading from the N-terminus, the 202-residue chain is GTP cyclohydrolase 1 (202 aa).

The Zn(2+) site is built by Cys-90, His-93, and Cys-163.

This sequence belongs to the GTP cyclohydrolase I family. In terms of assembly, homomer.

The enzyme catalyses GTP + H2O = 7,8-dihydroneopterin 3'-triphosphate + formate + H(+). The protein operates within cofactor biosynthesis; 7,8-dihydroneopterin triphosphate biosynthesis; 7,8-dihydroneopterin triphosphate from GTP: step 1/1. This chain is GTP cyclohydrolase 1, found in Mycobacterium marinum (strain ATCC BAA-535 / M).